A 441-amino-acid polypeptide reads, in one-letter code: N-acetylmuramyl-L-alanine amidase (441 aa).

The N-terminal stretch at 1–25 (MKTKTLFIFSAILTLSIFAPNETFA) is a signal peptide.

The protein belongs to the peptidase S12 family.

The enzyme catalyses Hydrolyzes the link between N-acetylmuramoyl residues and L-amino acid residues in certain cell-wall glycopeptides.. The protein operates within cell wall biogenesis; peptidoglycan recycling. Its function is as follows. Involved in muropeptide recycling. Hydrolyzes the amide bond between N-acetylmuramic acid (MurNAc) and the L-alanine residue of the stem peptide. Cannot hydrolyze muropeptides containing N-acetylglucosamine (GlcNAc) at the non-reducing end. The sequence is that of N-acetylmuramyl-L-alanine amidase from Bacillus subtilis (strain 168).